Consider the following 41-residue polypeptide: Augerpeptide-s11a (41 aa).

Post-translationally, contains 4 disulfide bonds. In terms of tissue distribution, expressed by the venom duct.

It is found in the secreted. Functionally, does not elicit any observable symptomatology in C.elegans. The polypeptide is Augerpeptide-s11a (Terebra subulata (Chocolate spotted auger)).